Reading from the N-terminus, the 400-residue chain is D(3) dopamine receptor (400 aa).

Residues M1 to Y32 are Extracellular-facing. N-linked (GlcNAc...) asparagine glycosylation is found at N12 and N19. Residues A33–L55 traverse the membrane as a helical segment. Residues K56–N65 lie on the Cytoplasmic side of the membrane. A helical transmembrane segment spans residues Y66–Y88. Residues L89–D104 are Extracellular-facing. N97 is a glycosylation site (N-linked (GlcNAc...) asparagine). A disulfide bridge connects residues C103 and C181. A helical transmembrane segment spans residues V105–I126. Over D127–R149 the chain is Cytoplasmic. A helical transmembrane segment spans residues V150 to F170. Residues G171–D187 are Extracellular-facing. N173 carries an N-linked (GlcNAc...) asparagine glycan. Residues F188–A209 traverse the membrane as a helical segment. Over R210 to Q329 the chain is Cytoplasmic. A helical membrane pass occupies residues M330–L351. The Extracellular segment spans residues N352 to S366. A disulfide bridge connects residues C355 and C358. A helical membrane pass occupies residues A367–F386. Topologically, residues N387–C400 are cytoplasmic.

Belongs to the G-protein coupled receptor 1 family. As to quaternary structure, interacts with CLIC6. Interacts with GRK4. Interacts with PALM. Interacts with FLNA (via filamin repeat 21); increases PKA-mediated phosphorylation of FLNA. Post-translationally, phosphorylated by GRK4. Palmitoylated.

Its subcellular location is the cell membrane. Its function is as follows. Dopamine receptor whose activity is mediated by G proteins which inhibit adenylyl cyclase. Promotes cell proliferation. This Chlorocebus aethiops (Green monkey) protein is D(3) dopamine receptor (DRD3).